Here is a 378-residue protein sequence, read N- to C-terminus: Chaperone protein DnaJ (378 aa).

The J domain occupies 5–69; that stretch reads EYYDRLGVSK…QKRAAYDQYG (65 aa). A CR-type zinc finger spans residues 134–216; the sequence is GVEKEVSYNR…CHGTGHEKQA (83 aa). Zn(2+) is bound by residues C147, C150, C164, C167, C190, C193, C204, and C207. 4 CXXCXGXG motif repeats span residues 147–154, 164–171, 190–197, and 204–211; these read CGTCLGSG, CRKCHGSG, CDICHGSG, and CQTCHGTG.

Belongs to the DnaJ family. As to quaternary structure, homodimer. Zn(2+) is required as a cofactor.

The protein resides in the cytoplasm. In terms of biological role, participates actively in the response to hyperosmotic and heat shock by preventing the aggregation of stress-denatured proteins and by disaggregating proteins, also in an autonomous, DnaK-independent fashion. Unfolded proteins bind initially to DnaJ; upon interaction with the DnaJ-bound protein, DnaK hydrolyzes its bound ATP, resulting in the formation of a stable complex. GrpE releases ADP from DnaK; ATP binding to DnaK triggers the release of the substrate protein, thus completing the reaction cycle. Several rounds of ATP-dependent interactions between DnaJ, DnaK and GrpE are required for fully efficient folding. Also involved, together with DnaK and GrpE, in the DNA replication of plasmids through activation of initiation proteins. This Streptococcus pyogenes protein is Chaperone protein DnaJ.